The primary structure comprises 344 residues: Anthranilate phosphoribosyltransferase (344 aa).

5-phospho-alpha-D-ribose 1-diphosphate-binding positions include glycine 85, 88-89, threonine 93, 95-98, 113-121, and serine 125; these read GD, NIST, and KHGGRSVSS. An anthranilate-binding site is contributed by glycine 85. Serine 97 provides a ligand contact to Mg(2+). Residue arginine 171 participates in anthranilate binding. 2 residues coordinate Mg(2+): aspartate 230 and glutamate 231.

This sequence belongs to the anthranilate phosphoribosyltransferase family. Homodimer. Requires Mg(2+) as cofactor.

It carries out the reaction N-(5-phospho-beta-D-ribosyl)anthranilate + diphosphate = 5-phospho-alpha-D-ribose 1-diphosphate + anthranilate. It participates in amino-acid biosynthesis; L-tryptophan biosynthesis; L-tryptophan from chorismate: step 2/5. Functionally, catalyzes the transfer of the phosphoribosyl group of 5-phosphorylribose-1-pyrophosphate (PRPP) to anthranilate to yield N-(5'-phosphoribosyl)-anthranilate (PRA). The protein is Anthranilate phosphoribosyltransferase of Delftia acidovorans (strain DSM 14801 / SPH-1).